A 178-amino-acid polypeptide reads, in one-letter code: Crossover junction endodeoxyribonuclease RuvC (178 aa).

Residues Asp7, Glu67, and Asp139 contribute to the active site. The Mg(2+) site is built by Asp7, Glu67, and Asp139.

This sequence belongs to the RuvC family. As to quaternary structure, homodimer which binds Holliday junction (HJ) DNA. The HJ becomes 2-fold symmetrical on binding to RuvC with unstacked arms; it has a different conformation from HJ DNA in complex with RuvA. In the full resolvosome a probable DNA-RuvA(4)-RuvB(12)-RuvC(2) complex forms which resolves the HJ. Mg(2+) is required as a cofactor.

It is found in the cytoplasm. The catalysed reaction is Endonucleolytic cleavage at a junction such as a reciprocal single-stranded crossover between two homologous DNA duplexes (Holliday junction).. Functionally, the RuvA-RuvB-RuvC complex processes Holliday junction (HJ) DNA during genetic recombination and DNA repair. Endonuclease that resolves HJ intermediates. Cleaves cruciform DNA by making single-stranded nicks across the HJ at symmetrical positions within the homologous arms, yielding a 5'-phosphate and a 3'-hydroxyl group; requires a central core of homology in the junction. The consensus cleavage sequence is 5'-(A/T)TT(C/G)-3'. Cleavage occurs on the 3'-side of the TT dinucleotide at the point of strand exchange. HJ branch migration catalyzed by RuvA-RuvB allows RuvC to scan DNA until it finds its consensus sequence, where it cleaves and resolves the cruciform DNA. This chain is Crossover junction endodeoxyribonuclease RuvC, found in Trichlorobacter lovleyi (strain ATCC BAA-1151 / DSM 17278 / SZ) (Geobacter lovleyi).